The sequence spans 278 residues: Thioredoxin-related transmembrane protein 1 (278 aa).

Residues 1–26 form the signal peptide; that stretch reads MAPSGSLRIPVAVLLLLLWGAPWAHG. In terms of domain architecture, Thioredoxin spans 27 to 132; it reads KRSDVRIITD…FINFISDKEW (106 aa). Over 27–180 the chain is Extracellular; sequence KRSDVRIITD…EDLGLPIWGS (154 aa). Residues Cys56 and Cys59 each act as nucleophile in the active site. Cys56 and Cys59 are oxidised to a cystine. The helical transmembrane segment at 181–203 threads the bilayer; that stretch reads YTVFALATLLSGLLLGLFMIFVA. The Cytoplasmic portion of the chain corresponds to 204-278; sequence DCLCPSKRRR…VGPSLATDKS (75 aa). Residues Cys205 and Cys207 are each lipidated (S-palmitoyl cysteine). A disordered region spans residues 213 to 278; it reads RPQPYPSRKL…VGPSLATDKS (66 aa). A phosphoserine mark is found at Ser226, Ser245, Ser268, Ser272, and Ser278. The segment covering 235–250 has biased composition (acidic residues); that stretch reads EEQEADVEDVSEEESE.

In terms of assembly, interacts with ATP2A2. Post-translationally, palmitoylated; palmitoylation is required for localization to mitochondria-associated endoplasmic reticulum membrane (MAM).

It is found in the endoplasmic reticulum membrane. The protein resides in the mitochondrion membrane. Its subcellular location is the secreted. It catalyses the reaction Catalyzes the rearrangement of -S-S- bonds in proteins.. Functionally, thiredoxin domain-containing protein that participates in various redox reactions through the reversible oxidation of its active center dithiol to a disulfide and catalyze dithiol-disulfide exchange reactions. Acts as a key inhibitor of the alternative triglyceride biosynthesis pathway by inhibiting the activity of TMEM68/DIESL at the endoplasmic reticulum, thereby restricting accumulation of triacylglycerol. The alternative triglyceride biosynthesis pathway mediates formation of triacylglycerol from diacylglycerol and membrane phospholipids. Acts as a protein disulfide isomerase by catalyzing formation or reduction of disulfide bonds. Specifically mediates formation of disulfide bonds of transmembrane proteins at the endoplasmic reticulum membrane. Involved in endoplasmic reticulum-associated degradation (ERAD) via its protein disulfide isomerase activity by acting on folding-defective polypeptides at the endoplasmic reticulum membrane. Acts as a negative regulator of platelet aggregation following secretion in the extracellular space. Acts as a regulator of endoplasmic reticulum-mitochondria contact sites via its ability to regulate redox signals. Regulates endoplasmic reticulum-mitochondria Ca(2+) flux. In Bos taurus (Bovine), this protein is Thioredoxin-related transmembrane protein 1 (TMX1).